We begin with the raw amino-acid sequence, 483 residues long: Proline--tRNA ligase (483 aa).

It belongs to the class-II aminoacyl-tRNA synthetase family. ProS type 3 subfamily. In terms of assembly, homodimer.

The protein localises to the cytoplasm. It catalyses the reaction tRNA(Pro) + L-proline + ATP = L-prolyl-tRNA(Pro) + AMP + diphosphate. Catalyzes the attachment of proline to tRNA(Pro) in a two-step reaction: proline is first activated by ATP to form Pro-AMP and then transferred to the acceptor end of tRNA(Pro). The sequence is that of Proline--tRNA ligase from Sulfolobus acidocaldarius (strain ATCC 33909 / DSM 639 / JCM 8929 / NBRC 15157 / NCIMB 11770).